We begin with the raw amino-acid sequence, 647 residues long: Probable potassium transport system protein Kup (647 aa).

13 helical membrane-spanning segments follow: residues 32-52, 74-94, 124-144, 166-186, 193-213, 230-250, 271-291, 300-320, 322-342, 361-381, 390-410, 418-438, and 443-463; these read IALMFAAIGIVFGDIGTSPLY, VISMVFWAFAIVVSLKYVLFV, LLIIMAGVFGACMFYGDAIIT, FVLPITVLILVILFFIQKTGT, FGPIMMVWFITIGLMGLHQVI, FLIEHSLQGFIVLGAVFLVLT, WFFIVMPCLLLNYFGQGAMFL, PFFLMVPEVFVFPLVILATAA, VIASQAVISGAFSMTSQAILL, IYMPFVNWTLLFLVIVVVLAF, AYGIAVTTTMIVTTLLAAIVM, TILVTLVIGAFLTVDLAFLTA, and IMEGGWFPLLLGAICFLFLMT.

Belongs to the HAK/KUP transporter (TC 2.A.72) family.

Its subcellular location is the cell inner membrane. It carries out the reaction K(+)(in) + H(+)(in) = K(+)(out) + H(+)(out). Transport of potassium into the cell. Likely operates as a K(+):H(+) symporter. This Polynucleobacter asymbioticus (strain DSM 18221 / CIP 109841 / QLW-P1DMWA-1) (Polynucleobacter necessarius subsp. asymbioticus) protein is Probable potassium transport system protein Kup.